An 82-amino-acid chain; its full sequence is MDYPLNEQSFEQITPYDERQPYYYPRPRPPFYPPYYYPRPYYPFYPFYPRPPYYYPRPRPPYYPWYGYGGGYGGGYGGGYGY.

A propeptide spanning residues M1–R19 is cleaved from the precursor.

It is found in the spore coat. Inner spore coat protein which seems to play a role in germination. In Bacillus subtilis (strain 168), this protein is Spore coat protein T (cotT).